Consider the following 496-residue polypeptide: MAGLPPPNKTPEIKFTKIFINNQFVDSVNGKAYSVINPCTTKKICDVQEGSKADIDKAVQACKLAFKRGTPWRRMDASRRGHLLYRLADLFERDIAYLSSLETLNTGKPYKSAYQDIVHCIQVLRYYAGWADKNMGQNIPVDGDFFSFTKHEPVGICGLIIPWNYPMLMMTWKMAPALSCGNCIVVKPAEQTPLTALYCASLMEEAGFPPGVVNVVPGYGTICGQSISSHLDINKVSFTGSTEVGKLVMQAAGSSNLKRCSLELSGKCPVVVFPDTDLDFAVQQAHEAAFQNMGQCRWSGSRAYVHESIYEEFVKRSVEQATRRKIGDPYELDTEHGPQIDEEQYTKVLDYIKSAQEQGAKLKYGGNKHGDKGGYYIEPTVFSEVSDNMKIAKEEIFGPVQLLMKFRDLDDVIDRCNNSDYGMAAAIFTNDINRIMTFTNAVNTGTIWVNTFHHWFPQAPFGGFKTSGISREMGKYALREYTEVKSVIYRIPQKDS.

Belongs to the aldehyde dehydrogenase family. Lens.

Functionally, omega-crystallins are structural components of squids and octopi eye lens. Contains relatively little if any DHAL activity. The polypeptide is Omega-crystallin (Enteroctopus dofleini (North Pacific giant octopus)).